The chain runs to 152 residues: uncharacterized protein (152 aa).

A run of 4 helical transmembrane segments spans residues 2 to 22 (ENLI…LSFL), 26 to 46 (FITF…HLIE), 92 to 112 (VVPI…FILL), and 128 to 148 (YIIT…YFLK).

Its subcellular location is the membrane. This is an uncharacterized protein from Acanthamoeba polyphaga mimivirus (APMV).